The following is a 439-amino-acid chain: Acyl transferase 4 (439 aa).

Residues His-166 and Asp-382 each act as proton acceptor in the active site.

Belongs to the plant acyltransferase family.

In terms of biological role, grass-specific monolignol p-coumaroyl transferase involved in the biosynthesis of acylated monolignols or monolignol conjugates that serve as monomer precursors of lignin. Can synthesize sinapyl p-coumarate, p-coumaryl p-coumarate, sinapyl caffeate and p-coumaryl caffeate in vitro. The protein is Acyl transferase 4 of Oryza sativa subsp. japonica (Rice).